We begin with the raw amino-acid sequence, 661 residues long: Fructose-1,6-bisphosphatase class 3 (661 aa).

This sequence belongs to the FBPase class 3 family. It depends on Mn(2+) as a cofactor.

The catalysed reaction is beta-D-fructose 1,6-bisphosphate + H2O = beta-D-fructose 6-phosphate + phosphate. Its pathway is carbohydrate biosynthesis; gluconeogenesis. The sequence is that of Fructose-1,6-bisphosphatase class 3 from Clostridioides difficile (strain 630) (Peptoclostridium difficile).